Reading from the N-terminus, the 355-residue chain is Histidinol-phosphate aminotransferase (355 aa).

The residue at position 211 (lysine 211) is an N6-(pyridoxal phosphate)lysine.

Belongs to the class-II pyridoxal-phosphate-dependent aminotransferase family. Histidinol-phosphate aminotransferase subfamily. Homodimer. It depends on pyridoxal 5'-phosphate as a cofactor.

The catalysed reaction is L-histidinol phosphate + 2-oxoglutarate = 3-(imidazol-4-yl)-2-oxopropyl phosphate + L-glutamate. It participates in amino-acid biosynthesis; L-histidine biosynthesis; L-histidine from 5-phospho-alpha-D-ribose 1-diphosphate: step 7/9. The sequence is that of Histidinol-phosphate aminotransferase from Aeromonas salmonicida (strain A449).